The following is a 281-amino-acid chain: DegV domain-containing protein CPE2509 (281 aa).

A DegV domain is found at 4 to 279; sequence IAIITDSSCD…PGMVGVSIQK (276 aa). Residues Thr-60 and Ser-93 each coordinate hexadecanoate.

May bind long-chain fatty acids, such as palmitate, and may play a role in lipid transport or fatty acid metabolism. The protein is DegV domain-containing protein CPE2509 of Clostridium perfringens (strain 13 / Type A).